Reading from the N-terminus, the 549-residue chain is Undecaprenyl phosphate-alpha-4-amino-4-deoxy-L-arabinose arabinosyl transferase (549 aa).

A run of 12 helical transmembrane segments spans residues 9 to 29 (LLLI…GLWI), 80 to 100 (LFGV…LAYL), 112 to 132 (SLAC…SGYA), 133 to 153 (NLDP…WHAL), 176 to 196 (FLTK…PYML), 204 to 224 (LLGY…PWAL), 256 to 276 (PWWF…GLLP), 288 to 308 (QAPV…FSLS), 312 to 332 (LPTY…HALV), 346 to 366 (NGLL…YLQL), 376 to 396 (FELF…LAQW), and 402 to 422 (AWAA…AAMP).

This sequence belongs to the glycosyltransferase 83 family.

It localises to the cell inner membrane. The catalysed reaction is 4-amino-4-deoxy-alpha-L-arabinopyranosyl di-trans,octa-cis-undecaprenyl phosphate + lipid IVA = lipid IIA + di-trans,octa-cis-undecaprenyl phosphate.. It functions in the pathway lipopolysaccharide metabolism; 4-amino-4-deoxy-beta-L-arabinose-lipid A biosynthesis. Catalyzes the transfer of the L-Ara4N moiety of the glycolipid undecaprenyl phosphate-alpha-L-Ara4N to lipid A. The modified arabinose is attached to lipid A and is required for resistance to polymyxin and cationic antimicrobial peptides. The chain is Undecaprenyl phosphate-alpha-4-amino-4-deoxy-L-arabinose arabinosyl transferase from Pseudomonas aeruginosa (strain LESB58).